The primary structure comprises 192 residues: Ribosomal RNA small subunit methyltransferase G (192 aa).

Residues Gly63, Phe68, 112 to 113 (IE), and Arg125 contribute to the S-adenosyl-L-methionine site.

It belongs to the methyltransferase superfamily. RNA methyltransferase RsmG family.

Its subcellular location is the cytoplasm. The catalysed reaction is guanosine(527) in 16S rRNA + S-adenosyl-L-methionine = N(7)-methylguanosine(527) in 16S rRNA + S-adenosyl-L-homocysteine. Functionally, specifically methylates the N7 position of guanine in position 527 of 16S rRNA. This Rickettsia bellii (strain OSU 85-389) protein is Ribosomal RNA small subunit methyltransferase G.